A 245-amino-acid chain; its full sequence is Tryptophan synthase alpha chain (245 aa).

Catalysis depends on proton acceptor residues Glu-35 and Asp-46.

This sequence belongs to the TrpA family. Tetramer of two alpha and two beta chains.

It catalyses the reaction (1S,2R)-1-C-(indol-3-yl)glycerol 3-phosphate + L-serine = D-glyceraldehyde 3-phosphate + L-tryptophan + H2O. The protein operates within amino-acid biosynthesis; L-tryptophan biosynthesis; L-tryptophan from chorismate: step 5/5. The alpha subunit is responsible for the aldol cleavage of indoleglycerol phosphate to indole and glyceraldehyde 3-phosphate. The polypeptide is Tryptophan synthase alpha chain (Sulfurisphaera tokodaii (strain DSM 16993 / JCM 10545 / NBRC 100140 / 7) (Sulfolobus tokodaii)).